The chain runs to 861 residues: Probable beta-glucosidase A (861 aa).

A signal peptide spans methionine 1–alanine 19. N-linked (GlcNAc...) asparagine glycans are attached at residues asparagine 62, asparagine 212, and asparagine 253. Residue aspartate 281 is part of the active site. Asparagine 316, asparagine 323, asparagine 355, asparagine 443, asparagine 524, asparagine 543, asparagine 565, asparagine 669, and asparagine 713 each carry an N-linked (GlcNAc...) asparagine glycan. Residues aspartate 730–glycine 754 form a disordered region. Residue asparagine 846 is glycosylated (N-linked (GlcNAc...) asparagine).

This sequence belongs to the glycosyl hydrolase 3 family.

The protein localises to the secreted. It carries out the reaction Hydrolysis of terminal, non-reducing beta-D-glucosyl residues with release of beta-D-glucose.. It functions in the pathway glycan metabolism; cellulose degradation. Beta-glucosidases are one of a number of cellulolytic enzymes involved in the degradation of cellulosic biomass. Catalyzes the last step releasing glucose from the inhibitory cellobiose. This chain is Probable beta-glucosidase A (bglA), found in Aspergillus oryzae (strain ATCC 42149 / RIB 40) (Yellow koji mold).